The following is a 167-amino-acid chain: Peptide deformylase (167 aa).

C91 and H133 together coordinate Fe cation. Residue E134 is part of the active site. Residue H137 participates in Fe cation binding.

Belongs to the polypeptide deformylase family. Fe(2+) is required as a cofactor.

The enzyme catalyses N-terminal N-formyl-L-methionyl-[peptide] + H2O = N-terminal L-methionyl-[peptide] + formate. In terms of biological role, removes the formyl group from the N-terminal Met of newly synthesized proteins. Requires at least a dipeptide for an efficient rate of reaction. N-terminal L-methionine is a prerequisite for activity but the enzyme has broad specificity at other positions. The sequence is that of Peptide deformylase from Baumannia cicadellinicola subsp. Homalodisca coagulata.